Here is a 299-residue protein sequence, read N- to C-terminus: Tetrahydromethanopterin S-methyltransferase subunit E (299 aa).

A run of 6 helical transmembrane segments spans residues 57–79 (AISGEPVSYGLYVAVAGTIAWAL), 95–115 (GVAAVVHGAYSVSAFLGRTVG), 133–153 (IGPIVGHGFIAVFTMTLAAYL), 158–178 (LGNPFPLPLVALIFGITVGAI), 237–257 (GLCFGLIIFLDGWRSILGNII), and 262–282 (VTKTSIALLVGLLVVAVAAGI).

It belongs to the MtrE family. In terms of assembly, the complex is composed of 8 subunits; MtrA, MtrB, MtrC, MtrD, MtrE, MtrF, MtrG and MtrH.

The protein localises to the cell membrane. The enzyme catalyses 5-methyl-5,6,7,8-tetrahydromethanopterin + coenzyme M + 2 Na(+)(in) = 5,6,7,8-tetrahydromethanopterin + methyl-coenzyme M + 2 Na(+)(out). Its pathway is one-carbon metabolism; methanogenesis from CO(2); methyl-coenzyme M from 5,10-methylene-5,6,7,8-tetrahydromethanopterin: step 2/2. Part of a complex that catalyzes the formation of methyl-coenzyme M and tetrahydromethanopterin from coenzyme M and methyl-tetrahydromethanopterin. This is an energy-conserving, sodium-ion translocating step. This Methanococcus maripaludis (strain C5 / ATCC BAA-1333) protein is Tetrahydromethanopterin S-methyltransferase subunit E.